We begin with the raw amino-acid sequence, 415 residues long: uncharacterized protein (415 aa).

The [4Fe-4S] cluster site is built by Cys-66, Cys-72, Cys-75, and Cys-149. S-adenosyl-L-methionine-binding residues include Gln-249, Phe-276, Glu-296, and Asp-344. Cys-370 functions as the Nucleophile in the catalytic mechanism.

It belongs to the class I-like SAM-binding methyltransferase superfamily. RNA M5U methyltransferase family.

This is an uncharacterized protein from Brucella suis biovar 1 (strain 1330).